A 380-amino-acid polypeptide reads, in one-letter code: Lipid-A-disaccharide synthase (380 aa).

This sequence belongs to the LpxB family.

It catalyses the reaction a lipid X + a UDP-2-N,3-O-bis[(3R)-3-hydroxyacyl]-alpha-D-glucosamine = a lipid A disaccharide + UDP + H(+). The protein operates within bacterial outer membrane biogenesis; LPS lipid A biosynthesis. Functionally, condensation of UDP-2,3-diacylglucosamine and 2,3-diacylglucosamine-1-phosphate to form lipid A disaccharide, a precursor of lipid A, a phosphorylated glycolipid that anchors the lipopolysaccharide to the outer membrane of the cell. The polypeptide is Lipid-A-disaccharide synthase (Photobacterium profundum (strain SS9)).